The sequence spans 320 residues: Adhesin MafA 1/4 (320 aa).

The first 18 residues, 1 to 18 (MRARLLIPILFSVFILSA), serve as a signal peptide directing secretion. The N-palmitoyl cysteine moiety is linked to residue C19. Residue C19 is the site of S-diacylglycerol cysteine attachment. Residues 287 to 320 (NHTGNSAPSVEADNSHEGYGYSDEAVRQHRQGQP) are disordered.

The protein belongs to the MafA family.

It is found in the cell outer membrane. This chain is Adhesin MafA 1/4 (mafA1), found in Neisseria gonorrhoeae (strain ATCC 700825 / FA 1090).